An 88-amino-acid chain; its full sequence is Apolipoprotein C-I (88 aa).

Positions 1–26 are cleaved as a signal peptide; that stretch reads MRLFIALPVLIVVVAMALEGPAPAQA.

It belongs to the apolipoprotein C1 family.

The protein localises to the secreted. Functionally, inhibitor of lipoprotein binding to the low density lipoprotein (LDL) receptor, LDL receptor-related protein, and very low density lipoprotein (VLDL) receptor. Associates with high density lipoproteins (HDL) and the triacylglycerol-rich lipoproteins in the plasma and makes up about 10% of the protein of the VLDL and 2% of that of HDL. Appears to interfere directly with fatty acid uptake and is also the major plasma inhibitor of cholesteryl ester transfer protein (CETP). Binds free fatty acids and reduces their intracellular esterification. Modulates the interaction of APOE with beta-migrating VLDL and inhibits binding of beta-VLDL to the LDL receptor-related protein. The polypeptide is Apolipoprotein C-I (Apoc1) (Rattus norvegicus (Rat)).